The primary structure comprises 100 residues: Putative pterin-4-alpha-carbinolamine dehydratase (100 aa).

Belongs to the pterin-4-alpha-carbinolamine dehydratase family.

It carries out the reaction (4aS,6R)-4a-hydroxy-L-erythro-5,6,7,8-tetrahydrobiopterin = (6R)-L-erythro-6,7-dihydrobiopterin + H2O. The polypeptide is Putative pterin-4-alpha-carbinolamine dehydratase (Rhodopseudomonas palustris (strain TIE-1)).